Consider the following 131-residue polypeptide: Fluoride-specific ion channel FluC 1 (131 aa).

Helical transmembrane passes span 38–58, 69–89, and 108–128; these read FPLS…IAMM, TVMM…TALN, and IATV…ALLA. Na(+)-binding residues include Gly79 and Ser82.

Belongs to the fluoride channel Fluc/FEX (TC 1.A.43) family.

It localises to the cell membrane. The enzyme catalyses fluoride(in) = fluoride(out). Its activity is regulated as follows. Na(+) is not transported, but it plays an essential structural role and its presence is essential for fluoride channel function. Fluoride-specific ion channel. Important for reducing fluoride concentration in the cell, thus reducing its toxicity. This Bifidobacterium longum (strain NCC 2705) protein is Fluoride-specific ion channel FluC 1.